Reading from the N-terminus, the 213-residue chain is Large ribosomal subunit protein uL3 (213 aa).

The residue at position 151 (glutamine 151) is an N5-methylglutamine.

Belongs to the universal ribosomal protein uL3 family. As to quaternary structure, part of the 50S ribosomal subunit. Forms a cluster with proteins L14 and L19. Post-translationally, methylated by PrmB.

In terms of biological role, one of the primary rRNA binding proteins, it binds directly near the 3'-end of the 23S rRNA, where it nucleates assembly of the 50S subunit. The protein is Large ribosomal subunit protein uL3 of Rhizobium leguminosarum bv. trifolii (strain WSM2304).